The chain runs to 227 residues: Venom allergen 5 (227 aa).

The N-terminal stretch at 1 to 23 (MEISGLVYLIIIVTIIDLPYGKA) is a signal peptide. 4 disulfide bridges follow: Cys27–Cys40, Cys31–Cys124, Cys49–Cys117, and Cys193–Cys210. The region spanning 68–212 (LKEHNDFRQK…WHYHYLVCNY (145 aa)) is the SCP domain.

The protein belongs to the CRISP family. Venom allergen 5-like subfamily. Expressed by the venom gland.

It localises to the secreted. The chain is Venom allergen 5 from Vespula maculifrons (Eastern yellow jacket).